The chain runs to 393 residues: Protein TsgA (393 aa).

12 helical membrane-spanning segments follow: residues tryptophan 11 to methionine 31, phenylalanine 51 to proline 71, phenylalanine 78 to leucine 98, alanine 101 to isoleucine 121, leucine 134 to phenylalanine 154, tryptophan 162 to glycine 182, isoleucine 206 to isoleucine 226, alanine 245 to leucine 265, isoleucine 273 to glutamine 293, tryptophan 298 to glycine 318, phenylalanine 332 to valine 352, and leucine 361 to valine 381.

This sequence belongs to the major facilitator superfamily. TsgA family.

It is found in the cell inner membrane. The chain is Protein TsgA from Salmonella paratyphi B (strain ATCC BAA-1250 / SPB7).